Reading from the N-terminus, the 351-residue chain is Auxin efflux carrier component 5 (351 aa).

A run of 10 helical transmembrane segments spans residues 7-27 (VYKV…GYGS), 39-59 (CDAI…IEFT), 71-91 (FIAA…LWAK), 100-120 (WSIT…GVPL), 132-152 (LVVQ…LFVL), 210-230 (ILGI…PGIL), 234-254 (ILIM…IFMA), 271-291 (MVLK…VLGL), 295-315 (VLRV…FIFA), and 329-349 (VIFG…ALEF).

It belongs to the auxin efflux carrier (TC 2.A.69.1) family. In terms of tissue distribution, expressed in elongating parts of hypocotyl, cotyledon vasculature and guard cells. Detected in root pericycle and root tip and at later developmental stages in leaves, stems and flowers. Expressed in veins of mature leaves.

Its subcellular location is the endoplasmic reticulum membrane. The protein resides in the cell membrane. Auxin transporter regulating intracellular auxin homeostasis and metabolism. Mediates the auxin transport from the cytosol into the lumen of the endoplasmic reticulum. May also act as an auxin efflux carrier when located to the cell membrane. PIN5 and PIN8 may have an antagonistic/compensatory activity. Involved in unfolded protein response (UPR) activation. Involved in the control of vein patterning. Promotes vein formation. PIN5, PIN6, and PIN8 control vein network geometry, but they are expressed in mutually exclusive domains of leaf vascular cells. The protein is Auxin efflux carrier component 5 of Arabidopsis thaliana (Mouse-ear cress).